The following is a 268-amino-acid chain: Ribosome maturation factor RimP (268 aa).

Disordered stretches follow at residues 1 to 41 and 223 to 268; these read MGSA…GRGG and LVEP…EMTR. A compositionally biased stretch (low complexity) spans 32–41; sequence PSGSARGRGG. Residues 248–257 are compositionally biased toward basic and acidic residues; that stretch reads ESNDDGREAG.

The protein belongs to the RimP family.

It localises to the cytoplasm. In terms of biological role, required for maturation of 30S ribosomal subunits. The polypeptide is Ribosome maturation factor RimP (Frankia casuarinae (strain DSM 45818 / CECT 9043 / HFP020203 / CcI3)).